Reading from the N-terminus, the 1126-residue chain is Carbamoyl phosphate synthase large chain (1126 aa).

The interval Met-1–Asp-402 is carboxyphosphate synthetic domain. 12 residues coordinate ATP: Arg-129, Arg-169, Gly-175, Gly-176, Glu-208, Ile-210, Glu-215, Gly-241, Val-242, His-243, Gln-285, and Glu-299. The ATP-grasp 1 domain occupies Lys-133–Leu-328. Gln-285, Glu-299, and Asn-301 together coordinate Mg(2+). Positions 285, 299, and 301 each coordinate Mn(2+). Positions Lys-403–Thr-551 are oligomerization domain. Residues Glu-552–Tyr-962 are carbamoyl phosphate synthetic domain. In terms of domain architecture, ATP-grasp 2 spans Gly-681–Val-881. ATP is bound by residues Arg-717, Lys-765, Leu-767, Glu-772, Gly-797, Val-798, His-799, Ser-800, Gln-840, and Glu-852. Mg(2+) is bound by residues Gln-840, Glu-852, and Asn-854. Residues Gln-840, Glu-852, and Asn-854 each coordinate Mn(2+). Positions Glu-963–Asp-1126 are allosteric domain. The MGS-like domain occupies Gly-964–Asp-1126.

Belongs to the CarB family. In terms of assembly, composed of two chains; the small (or glutamine) chain promotes the hydrolysis of glutamine to ammonia, which is used by the large (or ammonia) chain to synthesize carbamoyl phosphate. Tetramer of heterodimers (alpha,beta)4. The cofactor is Mg(2+). It depends on Mn(2+) as a cofactor.

The enzyme catalyses hydrogencarbonate + L-glutamine + 2 ATP + H2O = carbamoyl phosphate + L-glutamate + 2 ADP + phosphate + 2 H(+). It catalyses the reaction hydrogencarbonate + NH4(+) + 2 ATP = carbamoyl phosphate + 2 ADP + phosphate + 2 H(+). Its pathway is amino-acid biosynthesis; L-arginine biosynthesis; carbamoyl phosphate from bicarbonate: step 1/1. It functions in the pathway pyrimidine metabolism; UMP biosynthesis via de novo pathway; (S)-dihydroorotate from bicarbonate: step 1/3. Functionally, large subunit of the glutamine-dependent carbamoyl phosphate synthetase (CPSase). CPSase catalyzes the formation of carbamoyl phosphate from the ammonia moiety of glutamine, carbonate, and phosphate donated by ATP, constituting the first step of 2 biosynthetic pathways, one leading to arginine and/or urea and the other to pyrimidine nucleotides. The large subunit (synthetase) binds the substrates ammonia (free or transferred from glutamine from the small subunit), hydrogencarbonate and ATP and carries out an ATP-coupled ligase reaction, activating hydrogencarbonate by forming carboxy phosphate which reacts with ammonia to form carbamoyl phosphate. The sequence is that of Carbamoyl phosphate synthase large chain from Bifidobacterium adolescentis (strain ATCC 15703 / DSM 20083 / NCTC 11814 / E194a).